Reading from the N-terminus, the 235-residue chain is Ribonuclease PH (235 aa).

Residues Arg86 and 124–126 (GTR) each bind phosphate.

It belongs to the RNase PH family. Homohexameric ring arranged as a trimer of dimers.

It catalyses the reaction tRNA(n+1) + phosphate = tRNA(n) + a ribonucleoside 5'-diphosphate. In terms of biological role, phosphorolytic 3'-5' exoribonuclease that plays an important role in tRNA 3'-end maturation. Removes nucleotide residues following the 3'-CCA terminus of tRNAs; can also add nucleotides to the ends of RNA molecules by using nucleoside diphosphates as substrates, but this may not be physiologically important. Probably plays a role in initiation of 16S rRNA degradation (leading to ribosome degradation) during starvation. This Francisella tularensis subsp. novicida (strain U112) protein is Ribonuclease PH.